We begin with the raw amino-acid sequence, 255 residues long: Thiazole synthase (255 aa).

Residue Lys-96 is the Schiff-base intermediate with DXP of the active site. Residues Gly-157, 183–184 (AG), and 205–206 (NT) contribute to the 1-deoxy-D-xylulose 5-phosphate site.

It belongs to the ThiG family. In terms of assembly, homotetramer. Forms heterodimers with either ThiH or ThiS.

It localises to the cytoplasm. It catalyses the reaction [ThiS sulfur-carrier protein]-C-terminal-Gly-aminoethanethioate + 2-iminoacetate + 1-deoxy-D-xylulose 5-phosphate = [ThiS sulfur-carrier protein]-C-terminal Gly-Gly + 2-[(2R,5Z)-2-carboxy-4-methylthiazol-5(2H)-ylidene]ethyl phosphate + 2 H2O + H(+). It functions in the pathway cofactor biosynthesis; thiamine diphosphate biosynthesis. In terms of biological role, catalyzes the rearrangement of 1-deoxy-D-xylulose 5-phosphate (DXP) to produce the thiazole phosphate moiety of thiamine. Sulfur is provided by the thiocarboxylate moiety of the carrier protein ThiS. In vitro, sulfur can be provided by H(2)S. The sequence is that of Thiazole synthase from Staphylococcus epidermidis (strain ATCC 35984 / DSM 28319 / BCRC 17069 / CCUG 31568 / BM 3577 / RP62A).